Here is a 246-residue protein sequence, read N- to C-terminus: Acetoacetate decarboxylase (246 aa).

Lys-116 serves as the catalytic Schiff-base intermediate with acetoacetate.

This sequence belongs to the ADC family.

The enzyme catalyses acetoacetate + H(+) = acetone + CO2. Functionally, catalyzes the conversion of acetoacetate to acetone and carbon dioxide. The protein is Acetoacetate decarboxylase of Burkholderia cenocepacia (strain ATCC BAA-245 / DSM 16553 / LMG 16656 / NCTC 13227 / J2315 / CF5610) (Burkholderia cepacia (strain J2315)).